The chain runs to 142 residues: Putative pre-16S rRNA nuclease (142 aa).

This sequence belongs to the YqgF nuclease family.

Its subcellular location is the cytoplasm. In terms of biological role, could be a nuclease involved in processing of the 5'-end of pre-16S rRNA. The sequence is that of Putative pre-16S rRNA nuclease from Nitratidesulfovibrio vulgaris (strain DP4) (Desulfovibrio vulgaris).